Here is a 543-residue protein sequence, read N- to C-terminus: Transmembrane protease serine 13 (543 aa).

2 disordered regions span residues M1 to Y96 and R109 to S129. Topologically, residues M1–P143 are cytoplasmic. Repeat copies occupy residues T14–Q17 and A18–R22. The tract at residues T14–Q49 is 4 X 4 AA repeats of T-P-P-Q. The tract at residues A18 to R69 is 8 X 5 AA repeats of A-S-P-A-R. A 2-2; approximate repeat occupies T23–R27. Residues R27–A60 show a composition bias toward pro residues. The 1-2; approximate repeat unit spans residues A28–Q31. Tandem repeats lie at residues A32 to R36, T37 to Q40, A41 to R45, T46 to Q49, and A50 to R54. The stretch at A55–Q59 is one 2-6; approximate repeat. Repeat copies occupy residues A60–R64 and A65–R69. Composition is skewed to low complexity over residues S61–R94 and R109–R120. Residues L144–F164 traverse the membrane as a helical; Signal-anchor for type II membrane protein segment. At W165 to S543 the chain is on the extracellular side. The region spanning C180–C202 is the LDL-receptor class A domain. Residues E199–R301 enclose the SRCR domain. 3 disulfide bridges follow: C226–C290, C239–C293, and C327–C343. N-linked (GlcNAc...) asparagine glycosylation is found at N231 and N268. The region spanning I302–E535 is the Peptidase S1 domain. H342 acts as the Charge relay system in catalysis. Residue N381 is glycosylated (N-linked (GlcNAc...) asparagine). D390 (charge relay system) is an active-site residue. N421 is a glycosylation site (N-linked (GlcNAc...) asparagine). Disulfide bonds link C424-C493, C456-C472, and C483-C511. Catalysis depends on S487, which acts as the Charge relay system.

It belongs to the peptidase S1 family. As to quaternary structure, interacts with SPINT1/HAI-1; the interaction promotes the phosphorylation and cell membrane localization of TMPRSS13. Interacts with SPINT2/HAI-2; the interaction promotes the phosphorylation and cell membrane localization of TMPRSS13. The inactive zymogen is post-translationally modified and then trafficked to the cell surface, whereby it undergoes autocatalytic cleavage resulting in an activated form that is released extracellularly. Post-translationally, phosphorylation is required for localization at the cell surface. Phosphorylation increases following inhibition of protease activity by SPINT2/HAI-2. Expressed in the suprabasal squamous epithelium of the epidermis, hair follicles, oral epithelium, cornea, upper digestive tract, transitional epithelium of the bladder, prostate, heart, intestine, kidney and thymus.

It localises to the cell membrane. The protein resides in the secreted. The protein localises to the cytoplasm. Its activity is regulated as follows. Cleavage of HGF is inhibited by SPINT1/HAI-1 via the BPTI/Kunitz inhibitor 1 domain. Functionally, serine protease. Cleaves the proform of PRSS8/prostasin to form the active protein. Cleaves the proform of HGF to form the active protein which promotes MAPK signaling. Promotes the formation of the stratum corneum and subsequently the epidermal barrier in embryos. This is Transmembrane protease serine 13 (Tmprss13) from Mus musculus (Mouse).